The sequence spans 149 residues: Low molecular weight protein-tyrosine-phosphatase Wzb (149 aa).

C9 functions as the Nucleophile in the catalytic mechanism. The active site involves R15. The active-site Proton donor is D115.

Belongs to the low molecular weight phosphotyrosine protein phosphatase family.

It carries out the reaction O-phospho-L-tyrosyl-[protein] + H2O = L-tyrosyl-[protein] + phosphate. The protein operates within glycan metabolism; exopolysaccharide biosynthesis. Functionally, dephosphorylates Wzc. Required for the extracellular polysaccharide colanic acid synthesis. Probably involved in the export of colanic acid from the cell to medium. Involved in protection of cells against contact-dependent growth inhibition (CDI). This Salmonella typhimurium (strain LT2 / SGSC1412 / ATCC 700720) protein is Low molecular weight protein-tyrosine-phosphatase Wzb (wzb).